The primary structure comprises 165 residues: SsrA-binding protein (165 aa).

The protein belongs to the SmpB family.

The protein resides in the cytoplasm. Required for rescue of stalled ribosomes mediated by trans-translation. Binds to transfer-messenger RNA (tmRNA), required for stable association of tmRNA with ribosomes. tmRNA and SmpB together mimic tRNA shape, replacing the anticodon stem-loop with SmpB. tmRNA is encoded by the ssrA gene; the 2 termini fold to resemble tRNA(Ala) and it encodes a 'tag peptide', a short internal open reading frame. During trans-translation Ala-aminoacylated tmRNA acts like a tRNA, entering the A-site of stalled ribosomes, displacing the stalled mRNA. The ribosome then switches to translate the ORF on the tmRNA; the nascent peptide is terminated with the 'tag peptide' encoded by the tmRNA and targeted for degradation. The ribosome is freed to recommence translation, which seems to be the essential function of trans-translation. The chain is SsrA-binding protein from Parvibaculum lavamentivorans (strain DS-1 / DSM 13023 / NCIMB 13966).